Reading from the N-terminus, the 222-residue chain is Glycerol-3-phosphate acyltransferase (222 aa).

6 consecutive transmembrane segments (helical) span residues 4–24 (ALLL…IPTG), 56–76 (PAAI…VALV), 87–107 (ALPA…VVLG), 130–150 (FMLN…VIFF), 153–173 (IVSL…LALQ), and 174–191 (LPPP…YVIV).

This sequence belongs to the PlsY family. As to quaternary structure, probably interacts with PlsX.

It localises to the cell inner membrane. The enzyme catalyses an acyl phosphate + sn-glycerol 3-phosphate = a 1-acyl-sn-glycero-3-phosphate + phosphate. It functions in the pathway lipid metabolism; phospholipid metabolism. Functionally, catalyzes the transfer of an acyl group from acyl-phosphate (acyl-PO(4)) to glycerol-3-phosphate (G3P) to form lysophosphatidic acid (LPA). This enzyme utilizes acyl-phosphate as fatty acyl donor, but not acyl-CoA or acyl-ACP. This chain is Glycerol-3-phosphate acyltransferase, found in Synechocystis sp. (strain ATCC 27184 / PCC 6803 / Kazusa).